The chain runs to 287 residues: GDT1-like protein C17G8.08c (287 aa).

7 helical membrane-spanning segments follow: residues 7–27, 50–70, 89–109, 112–132, 194–214, 232–252, and 267–287; these read WAII…GEGM, LIFS…FIVA, ALFI…LLFP, LTDI…LMEA, VMAT…FVSE, VYGV…LAVI, and MFIG…QGFF.

The protein belongs to the GDT1 family.

It localises to the membrane. The polypeptide is GDT1-like protein C17G8.08c (Schizosaccharomyces pombe (strain 972 / ATCC 24843) (Fission yeast)).